Consider the following 71-residue polypeptide: Small ribosomal subunit protein bS21 (71 aa).

Belongs to the bacterial ribosomal protein bS21 family.

The sequence is that of Small ribosomal subunit protein bS21 from Hydrogenovibrio crunogenus (strain DSM 25203 / XCL-2) (Thiomicrospira crunogena).